Reading from the N-terminus, the 85-residue chain is UPF0386 protein Plav_1374 (85 aa).

The protein belongs to the UPF0386 family.

In Parvibaculum lavamentivorans (strain DS-1 / DSM 13023 / NCIMB 13966), this protein is UPF0386 protein Plav_1374.